A 326-amino-acid polypeptide reads, in one-letter code: Light-induced protein, chloroplastic (326 aa).

Residues 1 to 63 constitute a chloroplast transit peptide; sequence MASISSLNQI…TNPKPKFTAQ (63 aa).

This sequence belongs to the LIPC family. Associates with the major light-harvesting antenna complex polypeptides of the PSII oxygen-evolving complex. As to expression, expressed at high levels in leaves and in the petals and anthers of flowers.

Its subcellular location is the plastid. It is found in the chloroplast thylakoid membrane. Required for normal plant growth. May be both photoprotective and play an ancillary role in photosynthesis. May structurally stabilize thylakoids during osmotic and oxidative stress. This Solanum demissum (Wild potato) protein is Light-induced protein, chloroplastic.